Consider the following 38-residue polypeptide: NLYQFGNMIKCTIPKRLSWRSFVDYGCYCGKGGSGTPV.

Y28, G30, and G32 together coordinate Ca(2+).

This sequence belongs to the phospholipase A2 family. Group I subfamily. Ca(2+) serves as cofactor. As to expression, expressed by the venom gland.

It localises to the secreted. It carries out the reaction a 1,2-diacyl-sn-glycero-3-phosphocholine + H2O = a 1-acyl-sn-glycero-3-phosphocholine + a fatty acid + H(+). Snake venom phospholipase A2 (PLA2) that inhibits neuromuscular transmission by blocking acetylcholine release from the nerve termini. PLA2 catalyzes the calcium-dependent hydrolysis of the 2-acyl groups in 3-sn-phosphoglycerides. This Calliophis bivirgatus (Blue Malaysian coral snake) protein is Phospholipase A2 2.